Reading from the N-terminus, the 511-residue chain is Bifunctional purine biosynthesis protein PurH (511 aa).

In terms of domain architecture, MGS-like spans 1 to 145 (MKKRALVSVS…KNHQFVSVIV (145 aa)).

It belongs to the PurH family.

It catalyses the reaction (6R)-10-formyltetrahydrofolate + 5-amino-1-(5-phospho-beta-D-ribosyl)imidazole-4-carboxamide = 5-formamido-1-(5-phospho-D-ribosyl)imidazole-4-carboxamide + (6S)-5,6,7,8-tetrahydrofolate. The enzyme catalyses IMP + H2O = 5-formamido-1-(5-phospho-D-ribosyl)imidazole-4-carboxamide. The protein operates within purine metabolism; IMP biosynthesis via de novo pathway; 5-formamido-1-(5-phospho-D-ribosyl)imidazole-4-carboxamide from 5-amino-1-(5-phospho-D-ribosyl)imidazole-4-carboxamide (10-formyl THF route): step 1/1. It participates in purine metabolism; IMP biosynthesis via de novo pathway; IMP from 5-formamido-1-(5-phospho-D-ribosyl)imidazole-4-carboxamide: step 1/1. This is Bifunctional purine biosynthesis protein PurH from Bacillus cereus (strain G9842).